Consider the following 233-residue polypeptide: LEAVSHASDTHYGYGDSAAKEIGGDVLKHAEMVHTGLKEYKDVDKXGPVAKELSGLPSGPSAGSGPPPSALFAQIHQGESITHALKHVADDEKTHKNPADKAQSGPVRXGPKPFSASKPGISPSPKPVTKKWRXENXENVSNLVIDDTELKSVNSTLQIKXXINSISVDNYKVPXISINKXDGRHIYLSKNSLDCEIVSAKSSEMNVLIPTEGGDFNEFPVPEQXKXIWNGQK.

Tyrosine 14 is subject to Phosphotyrosine. A Phosphoserine modification is found at serine 17. Disordered stretches follow at residues 43–71 (VDKXGPVAKELSGLPSGPSAGSGPPPSAL) and 91–129 (DEKTHKNPADKAQSGPVRXGPKPFSASKPGISPSPKPVT). A compositionally biased stretch (low complexity) spans 53-64 (LSGLPSGPSAGS). Lysine 101 carries the post-translational modification N6-methyllysine. Phosphoserine is present on residues serine 104, serine 115, serine 122, and serine 124. Lysine 151 participates in a covalent cross-link: Glycyl lysine isopeptide (Lys-Gly) (interchain with G-Cter in SUMO1). The 49-residue stretch at 173 to 221 (VPXISINKXDGRHIYLSKNSLDCEIVSAKSSEMNVLIPTEGGDFNEFPV) folds into the C-CAP/cofactor C-like domain.

The protein belongs to the CAP family. Homodimer. Binds actin monomers.

It is found in the cell membrane. Functionally, directly regulates filament dynamics and has been implicated in a number of complex developmental and morphological processes, including mRNA localization and the establishment of cell polarity. The polypeptide is Adenylyl cyclase-associated protein 1 (CAP1) (Sus scrofa (Pig)).